The following is a 200-amino-acid chain: NADH-quinone oxidoreductase subunit B 2 (200 aa).

[4Fe-4S] cluster contacts are provided by Cys-79, Cys-80, Cys-144, and Cys-174.

Belongs to the complex I 20 kDa subunit family. In terms of assembly, NDH-1 is composed of 14 different subunits. Subunits NuoB, C, D, E, F, and G constitute the peripheral sector of the complex. The cofactor is [4Fe-4S] cluster.

It is found in the cell inner membrane. It catalyses the reaction a quinone + NADH + 5 H(+)(in) = a quinol + NAD(+) + 4 H(+)(out). Its function is as follows. NDH-1 shuttles electrons from NADH, via FMN and iron-sulfur (Fe-S) centers, to quinones in the respiratory chain. The immediate electron acceptor for the enzyme in this species is believed to be ubiquinone. Couples the redox reaction to proton translocation (for every two electrons transferred, four hydrogen ions are translocated across the cytoplasmic membrane), and thus conserves the redox energy in a proton gradient. The polypeptide is NADH-quinone oxidoreductase subunit B 2 (Rhodopseudomonas palustris (strain BisA53)).